Reading from the N-terminus, the 112-residue chain is UPF0342 protein SPH_1504 (112 aa).

This sequence belongs to the UPF0342 family.

This chain is UPF0342 protein SPH_1504, found in Streptococcus pneumoniae (strain Hungary19A-6).